The following is a 499-amino-acid chain: MEESPYLHSPYQVAIIATDLHHEDTIIQAAQSLDCLHKTINSIFERIDARLARNGSKVEDINNRVKRAQAKIDALVGSKRAIQIFAPARFPASDVLAPLPATFPQVAANPLMEQQVDQLPQGTYSSHSAADQKPDDADIFFHVRGDREQESPLVAERKITNRTAGLGILPAGGVRSVPSLMRFNTNEFAYGEDLNAWKRSLPPQNARRVASQSTQLTGEKQLAPAPHSLAHGTTKLATPAGDLRYNPAALAAPAIDVPLDLPDLPGIANDLQYEPVEEQTPIAPSQQFGDLPELPDLGLEEQDIIVQAIAAQTHIPGPVRRKSVGQCPSPVTAAPPPPPPPPPPPPPPPPAQTSAIPSPPPFPTKGAVKPLSPSLATPLNMPQPPPATEDPRSELMAAIRNAGGVHGGRLRSPAAAPLDVVDNSRSKAGGAVTGDLMADLHNKLMLRRKGISGSQNPVEATAGNPLMQQLSRVIPPPVQPRKGSKSSDEHSEDDEDGWN.

Disordered stretches follow at residues 317–433 (GPVR…GAVT) and 448–499 (RKGI…DGWN). The segment covering 333 to 363 (AAPPPPPPPPPPPPPPPPAQTSAIPSPPPFP) has biased composition (pro residues). Positions 391-413 (PRSELMAAIRNAGGVHGGRLRSP) constitute a WH2 domain. The segment covering 490–499 (HSEDDEDGWN) has biased composition (acidic residues). A Phosphoserine modification is found at Ser491.

It belongs to the WASH1 family. In terms of assembly, component of the WASH complex. Interacts with spir and capu. Interacts (via N-terminus) with Rho1 (via N-terminus).

In terms of biological role, acts as a nucleation-promoting factor by activating the Arp2/3 complex to induce actin polymerization. Participates in both linear- and branched-actin networks. Functions in linear-filament (bundled F-actin) by acting downstream of Rho1 and regulating actin and microtubule organization during oogenesis. Nucleates actin in an Arp2/3-dependent manner and exhibits F-actin and microtubule bundling and cross-linking activity in the egg chamber. During embryogenesis, acts downstream of Rho1 to activate the Arp2/3 complex which is necessary for the developmental migration of tail hemocytes anteriorly along the ventral midline. Its function in hemocyte transmigration is independent of the WASH complex. May play a role in endosomal sorting; its assembly in the WASH complex may regulate its nucleation-promoting factor (NPF) activity. This chain is WASH complex subunit 1, found in Drosophila melanogaster (Fruit fly).